The sequence spans 255 residues: Hydroxyacylglutathione hydrolase (255 aa).

Residues His56, His58, Asp60, His61, His114, Asp133, and His171 each contribute to the Zn(2+) site.

It belongs to the metallo-beta-lactamase superfamily. Glyoxalase II family. In terms of assembly, monomer. The cofactor is Zn(2+).

The catalysed reaction is an S-(2-hydroxyacyl)glutathione + H2O = a 2-hydroxy carboxylate + glutathione + H(+). It functions in the pathway secondary metabolite metabolism; methylglyoxal degradation; (R)-lactate from methylglyoxal: step 2/2. In terms of biological role, thiolesterase that catalyzes the hydrolysis of S-D-lactoyl-glutathione to form glutathione and D-lactic acid. In Bradyrhizobium sp. (strain ORS 278), this protein is Hydroxyacylglutathione hydrolase.